The primary structure comprises 87 residues: Beta-toxin Ct1a (87 aa).

The signal sequence occupies residues 1–19; the sequence is MNSLLMITACLALIGTVWA. In terms of domain architecture, LCN-type CS-alpha/beta spans 20-85; it reads KEGYLVNHST…VWPLPKKTCN (66 aa). Cystine bridges form between Cys31–Cys84, Cys35–Cys60, Cys44–Cys65, and Cys48–Cys67. Residue Asn85 is modified to Asparagine amide.

It belongs to the long (4 C-C) scorpion toxin superfamily. Sodium channel inhibitor family. Beta subfamily. In terms of tissue distribution, expressed by the venom gland.

It is found in the secreted. Functionally, beta toxins bind voltage-independently at site-4 of sodium channels (Nav) and shift the voltage of activation toward more negative potentials thereby affecting sodium channel activation and promoting spontaneous and repetitive firing. Is lethal to mice but does not show toxicity to freshwater shrimp and crickets. This Centruroides tecomanus (Scorpion) protein is Beta-toxin Ct1a.